The primary structure comprises 434 residues: Histidinol dehydrogenase (434 aa).

Residues Y130, Q191, and N214 each contribute to the NAD(+) site. Residues S237, Q259, and H262 each contribute to the substrate site. The Zn(2+) site is built by Q259 and H262. Catalysis depends on proton acceptor residues E327 and H328. Substrate contacts are provided by H328, D361, E415, and H420. Position 361 (D361) interacts with Zn(2+). H420 lines the Zn(2+) pocket.

The protein belongs to the histidinol dehydrogenase family. Zn(2+) is required as a cofactor.

It carries out the reaction L-histidinol + 2 NAD(+) + H2O = L-histidine + 2 NADH + 3 H(+). It participates in amino-acid biosynthesis; L-histidine biosynthesis; L-histidine from 5-phospho-alpha-D-ribose 1-diphosphate: step 9/9. In terms of biological role, catalyzes the sequential NAD-dependent oxidations of L-histidinol to L-histidinaldehyde and then to L-histidine. In Cereibacter sphaeroides (strain ATCC 17023 / DSM 158 / JCM 6121 / CCUG 31486 / LMG 2827 / NBRC 12203 / NCIMB 8253 / ATH 2.4.1.) (Rhodobacter sphaeroides), this protein is Histidinol dehydrogenase.